A 510-amino-acid chain; its full sequence is Cytochrome P450 93A3 (510 aa).

Residues 64–84 traverse the membrane as a helical segment; that stretch reads PIIHLFLGSVPCVVASTAEAA. A heme-binding site is contributed by C448.

This sequence belongs to the cytochrome P450 family. Heme is required as a cofactor.

The protein localises to the membrane. The chain is Cytochrome P450 93A3 (CYP93A3) from Glycine max (Soybean).